The chain runs to 1088 residues: RNA-directed RNA polymerase (1088 aa).

Residues 501–687 (LSYGDVTRFL…AKRYIAGGKI (187 aa)) enclose the RdRp catalytic domain.

The protein belongs to the reoviridae RNA-directed RNA polymerase family. Interacts with VP3 (Potential). Interacts with VP2; this interaction activates VP1. Interacts with NSP5; this interaction is probably necessary for the formation of functional virus factories. Interacts with NSP2; this interaction is weak. Mg(2+) is required as a cofactor.

It is found in the virion. It catalyses the reaction RNA(n) + a ribonucleoside 5'-triphosphate = RNA(n+1) + diphosphate. Its function is as follows. RNA-directed RNA polymerase that is involved in both transcription and genome replication. Together with VP3 capping enzyme, forms an enzyme complex positioned near the channels situated at each of the five-fold vertices of the core. Following infection, the outermost layer of the virus is lost, leaving a double-layered particle (DLP) made up of the core and VP6 shell. VP1 then catalyzes the transcription of fully conservative plus-strand genomic RNAs that are extruded through the DLP's channels into the cytoplasm where they function as mRNAs for translation of viral proteins. One copy of each of the viral (+)RNAs is also recruited during core assembly, together with newly synthesized polymerase complexes and VP2. The polymerase of these novo-formed particles catalyzes the synthesis of complementary minus-strands leading to dsRNA formation. To do so, the polymerase specifically recognizes and binds 4 bases 5'-UGUG-3' in the conserved 3'-sequence of plus-strand RNA templates. VP2 presumably activates the autoinhibited VP1-RNA complex to coordinate packaging and genome replication. Once dsRNA synthesis is complete, the polymerase switches to the transcriptional mode, thus providing secondary transcription. This is RNA-directed RNA polymerase from Bos taurus (Bovine).